The sequence spans 546 residues: CCA tRNA nucleotidyltransferase, mitochondrial (546 aa).

The protein belongs to the tRNA nucleotidyltransferase/poly(A) polymerase family.

It is found in the mitochondrion. The protein localises to the cytoplasm. It localises to the nucleus. It catalyses the reaction a tRNA precursor + 2 CTP + ATP = a tRNA with a 3' CCA end + 3 diphosphate. Its function is as follows. Nucleotidyltransferase that catalyzes the addition and repair of the essential 3'-terminal CCA sequence in tRNAs, which is necessary for the attachment of amino acids to the 3' terminus of tRNA molecules, using CTP and ATP as substrates. tRNA 3'-terminal CCA addition is required both for tRNA processing and repair. Also involved in tRNA surveillance by mediating tandem CCA addition to generate a CCACCA at the 3' terminus of unstable tRNAs. While stable tRNAs receive only 3'-terminal CCA, unstable tRNAs are marked with CCACCA and rapidly degraded. The structural flexibility of RNA controls the choice between CCA versus CCACCA addition: following the first CCA addition cycle, nucleotide-binding to the active site triggers a clockwise screw motion, producing torque on the RNA. This ejects stable RNAs, whereas unstable RNAs are refolded while bound to the enzyme and subjected to a second CCA catalytic cycle. In Saccharomyces cerevisiae (strain ATCC 204508 / S288c) (Baker's yeast), this protein is CCA tRNA nucleotidyltransferase, mitochondrial (CCA1).